The primary structure comprises 181 residues: Nucleoside triphosphate/diphosphate phosphatase (181 aa).

Residue R26 is the Proton donor of the active site. Residues N90, D106, D108, D110, D123, and E126 each contribute to the Mg(2+) site.

It belongs to the Ntdp family. Mg(2+) serves as cofactor.

The enzyme catalyses a ribonucleoside 5'-triphosphate + H2O = a ribonucleoside 5'-diphosphate + phosphate + H(+). It carries out the reaction a ribonucleoside 5'-diphosphate + H2O = a ribonucleoside 5'-phosphate + phosphate + H(+). Has nucleoside phosphatase activity towards nucleoside triphosphates and nucleoside diphosphates. This Staphylococcus carnosus (strain TM300) protein is Nucleoside triphosphate/diphosphate phosphatase.